The sequence spans 172 residues: Adenine phosphoribosyltransferase (172 aa).

Belongs to the purine/pyrimidine phosphoribosyltransferase family. As to quaternary structure, homodimer.

It localises to the cytoplasm. The enzyme catalyses AMP + diphosphate = 5-phospho-alpha-D-ribose 1-diphosphate + adenine. The protein operates within purine metabolism; AMP biosynthesis via salvage pathway; AMP from adenine: step 1/1. Functionally, catalyzes a salvage reaction resulting in the formation of AMP, that is energically less costly than de novo synthesis. The chain is Adenine phosphoribosyltransferase from Polynucleobacter necessarius subsp. necessarius (strain STIR1).